The primary structure comprises 41 residues: Large ribosomal subunit protein bL36 (41 aa).

Belongs to the bacterial ribosomal protein bL36 family.

This Sinorhizobium medicae (strain WSM419) (Ensifer medicae) protein is Large ribosomal subunit protein bL36.